Consider the following 341-residue polypeptide: UDP-3-O-acylglucosamine N-acyltransferase (341 aa).

His-241 (proton acceptor) is an active-site residue.

The protein belongs to the transferase hexapeptide repeat family. LpxD subfamily. In terms of assembly, homotrimer.

It carries out the reaction a UDP-3-O-[(3R)-3-hydroxyacyl]-alpha-D-glucosamine + a (3R)-hydroxyacyl-[ACP] = a UDP-2-N,3-O-bis[(3R)-3-hydroxyacyl]-alpha-D-glucosamine + holo-[ACP] + H(+). The protein operates within bacterial outer membrane biogenesis; LPS lipid A biosynthesis. Catalyzes the N-acylation of UDP-3-O-acylglucosamine using 3-hydroxyacyl-ACP as the acyl donor. Is involved in the biosynthesis of lipid A, a phosphorylated glycolipid that anchors the lipopolysaccharide to the outer membrane of the cell. The sequence is that of UDP-3-O-acylglucosamine N-acyltransferase from Mannheimia succiniciproducens (strain KCTC 0769BP / MBEL55E).